The chain runs to 200 residues: MKSLHIICLLFIFVARGNSRSCDFCHNIGADCEGFQHECSSPEDECGKVFLEISSASLSVRTVHKNCFSSSVCKLRHFDVNIGHDSYIRGRINCCEKEPCEDQSFPGLPLSQPNGYYCPGSLGLFTKDSTEFEAICKGTETKCINIVGHRYEHYPGDIAYNLKGCISSCPLLSLSNATHEENRNYLEKVECKDALQFEKQ.

Positions 1 to 19 (MKSLHIICLLFIFVARGNS) are cleaved as a signal peptide. 8 disulfide bridges follow: C22–C46, C25–C32, C39–C67, C73–C94, C95–C100, C118–C143, C136–C165, and C169–C191. N-linked (GlcNAc...) asparagine glycosylation occurs at N176.

It belongs to the CNF-like-inhibitor family. In terms of assembly, occurs as a mixture of oligomers. Tetrameric arrangement appears to be the predominant quaternary structure. In terms of processing, N-glycosylated. As to expression, expressed by the liver.

Its subcellular location is the secreted. In terms of biological role, inhibits basic phospholipase A2 isozymes PLA-B, BP-I and BP-II. This Protobothrops flavoviridis (Habu) protein is Phospholipase A2 inhibitor 1.